A 198-amino-acid polypeptide reads, in one-letter code: Recombination protein RecR (198 aa).

Residues 56-71 (CTTCGNIDTHDPCAIC) form a C4-type zinc finger. Residues 79–174 (RSLCVVEEVS…RLTQLAHGLP (96 aa)) form the Toprim domain.

This sequence belongs to the RecR family.

May play a role in DNA repair. It seems to be involved in an RecBC-independent recombinational process of DNA repair. It may act with RecF and RecO. The sequence is that of Recombination protein RecR from Sphingopyxis alaskensis (strain DSM 13593 / LMG 18877 / RB2256) (Sphingomonas alaskensis).